The primary structure comprises 451 residues: Probable asparagine--tRNA ligase, cytoplasmic (451 aa).

This sequence belongs to the class-II aminoacyl-tRNA synthetase family.

The protein localises to the cytoplasm. It carries out the reaction tRNA(Asn) + L-asparagine + ATP = L-asparaginyl-tRNA(Asn) + AMP + diphosphate + H(+). The polypeptide is Probable asparagine--tRNA ligase, cytoplasmic (Encephalitozoon cuniculi (strain GB-M1) (Microsporidian parasite)).